Consider the following 501-residue polypeptide: Probable cytochrome P450 6a20 (501 aa).

Cys-445 contacts heme.

The protein belongs to the cytochrome P450 family. Heme serves as cofactor.

Its subcellular location is the endoplasmic reticulum membrane. The protein localises to the microsome membrane. Functionally, may be involved in the metabolism of insect hormones and in the breakdown of synthetic insecticides. This Drosophila melanogaster (Fruit fly) protein is Probable cytochrome P450 6a20 (Cyp6a20).